Here is a 241-residue protein sequence, read N- to C-terminus: NAD-dependent protein deacylase (241 aa).

Residues 1-237 (MNFPYRNIVV…PKLVDEILAL (237 aa)) enclose the Deacetylase sirtuin-type domain. Residue 13–32 (GAGISAESGIQTFRAQDGLW) participates in NAD(+) binding. Substrate is bound by residues Tyr57 and Arg60. Residue 94-97 (QNID) participates in NAD(+) binding. His112 (proton acceptor) is an active-site residue. Positions 120 and 139 each coordinate Zn(2+). NAD(+) contacts are provided by residues 179–181 (GTS), 205–207 (NLE), and Ala223.

The protein belongs to the sirtuin family. Class III subfamily. In terms of assembly, monomer. The cofactor is Zn(2+).

It localises to the cytoplasm. Its subcellular location is the host cytoplasm. The protein localises to the host cytosol. It is found in the host nucleus. It carries out the reaction N(6)-acetyl-L-lysyl-[protein] + NAD(+) + H2O = 2''-O-acetyl-ADP-D-ribose + nicotinamide + L-lysyl-[protein]. It catalyses the reaction N(6)-succinyl-L-lysyl-[protein] + NAD(+) + H2O = 2''-O-succinyl-ADP-D-ribose + nicotinamide + L-lysyl-[protein]. Functionally, NAD-dependent lysine deacetylase and desuccinylase that specifically removes acetyl and succinyl groups on target proteins. Modulates the activities of several proteins which are inactive in their acylated form. In the intracellular pathogen V.parahaemolyticus, this enzyme regulates host response during infection by induction of host histone deacetylation; it specifically causes deacetylation of histone lysine residues H3K56, H3K9, H3K18 and H4K16 which results in transcriptional repression of several host genes involved in epigenetic regulation, immune response, and autophagy. This chain is NAD-dependent protein deacylase, found in Vibrio parahaemolyticus serotype O3:K6 (strain RIMD 2210633).